Here is a 392-residue protein sequence, read N- to C-terminus: S-adenosylmethionine synthase (392 aa).

Glu10 provides a ligand contact to Mg(2+). His16 contacts ATP. Glu44 provides a ligand contact to K(+). L-methionine contacts are provided by Glu57 and Gln100. ATP-binding positions include 168 to 170 (DGK), 236 to 239 (SGRF), Asp247, 253 to 254 (RK), Ala270, Lys274, and Lys278. Asp247 lines the L-methionine pocket. Residue Lys278 participates in L-methionine binding.

It belongs to the AdoMet synthase family. Homotetramer. Mn(2+) serves as cofactor. It depends on Mg(2+) as a cofactor. Requires Co(2+) as cofactor. The cofactor is K(+).

It localises to the cytoplasm. It carries out the reaction L-methionine + ATP + H2O = S-adenosyl-L-methionine + phosphate + diphosphate. Its pathway is amino-acid biosynthesis; S-adenosyl-L-methionine biosynthesis; S-adenosyl-L-methionine from L-methionine: step 1/1. Functionally, catalyzes the formation of S-adenosylmethionine from methionine and ATP. The reaction comprises two steps that are both catalyzed by the same enzyme: formation of S-adenosylmethionine (AdoMet) and triphosphate, and subsequent hydrolysis of the triphosphate. This is S-adenosylmethionine synthase (SAMS) from Phaseolus lunatus (Lima bean).